Consider the following 421-residue polypeptide: MDKLIITGGARLDGEIRISGAKNSALPILAATLLCDGPVTVANLPHLHDITTMIELFGRMGIEPVIDEKLSVEIDPRTIKTLIAPYELVKTMRASILVLGPMVARFGEAEVALPGGCAIGSRPVDLHIRGLEAMGATIDVEGGYIKAKAPEGGLRGANFFFDTVSVTGTENIMMAAALANGRSVLQNAAREPEVVDLANFLIAMGANITGAGTDTITVDGVKRLHPATYKVMPDRIETGTYLVAAAVTGGRVKVKDTDPTILEAVLEKLREAGAEITTGEDWIELNMHGKRPKAVNVRTAPYPAFPTDMQAQFISLNAIAEGTGAVIETIFENRFMHVYELHRMGAKIQVEGNTAIVTGTEKLKGAPVMATDLRASASLVISALIAEGDTLIDRIYHIDRGYECIEEKLQMLGAKIRRVPG.

22 to 23 (KN) serves as a coordination point for phosphoenolpyruvate. A UDP-N-acetyl-alpha-D-glucosamine-binding site is contributed by R93. The active-site Proton donor is C117. 2-(S-cysteinyl)pyruvic acid O-phosphothioketal is present on C117. UDP-N-acetyl-alpha-D-glucosamine-binding positions include 122-126 (RPVDL), D308, and I330.

The protein belongs to the EPSP synthase family. MurA subfamily.

It localises to the cytoplasm. It carries out the reaction phosphoenolpyruvate + UDP-N-acetyl-alpha-D-glucosamine = UDP-N-acetyl-3-O-(1-carboxyvinyl)-alpha-D-glucosamine + phosphate. The protein operates within cell wall biogenesis; peptidoglycan biosynthesis. Its function is as follows. Cell wall formation. Adds enolpyruvyl to UDP-N-acetylglucosamine. The protein is UDP-N-acetylglucosamine 1-carboxyvinyltransferase of Pseudomonas fluorescens (strain SBW25).